Here is a 158-residue protein sequence, read N- to C-terminus: Endoribonuclease YbeY (158 aa).

3 residues coordinate Zn(2+): histidine 119, histidine 123, and histidine 129.

The protein belongs to the endoribonuclease YbeY family. Zn(2+) serves as cofactor.

It is found in the cytoplasm. Functionally, single strand-specific metallo-endoribonuclease involved in late-stage 70S ribosome quality control and in maturation of the 3' terminus of the 16S rRNA. The sequence is that of Endoribonuclease YbeY from Acinetobacter baumannii (strain SDF).